A 507-amino-acid polypeptide reads, in one-letter code: MKLAYWMYAGPAHIGTLRVASSFKKVHAIMHAPLGDDYFNVMRSMLERDRDFTPVTASVVDRHVLARGSQEKVVENITRKDREEKPDLVILTPTCTSSILQEDLQNFVSRASIETEADVLLADVNHYRVNELQASDRTLEQIVTFYMEKAKSNNILTKKTIKPSVNIIGAVSLGFHNQHDIAELKRLFHDLDIQINQVIPENASVHDLKNLPSAWFNFVPYRETGLMTALYLKKEFNMPYIDITPMGIVQTATSIRSIQKILNALGATVNYEKYIDEQTRFISQSAWFSRSIDCQNLTGKKAIVFGDATHAAAITRILHQEMGIHVAWCGTYCKYDEEWFREQVKGFCDEVIISDDHGLIGDLIAKTEPAAIFGTQMERHIGKRLNIPCGVISSPVHIQNFPLSYRPFLGYEGTNQIADLVYNSFTLGMEDHLLEIFGGHDTTEALSVGISADDSLNWSDEAQKELSKIPGFVRGKVKRNTEKFARDCSKNLITLELMYEAKEKVSS.

D36 is a binding site for [4Fe-4S] cluster. The Proton donor role is filled by D293. 428-429 (GM) contributes to the substrate binding site.

It belongs to the ChlB/BchB/BchZ family. As to quaternary structure, protochlorophyllide reductase is composed of three subunits; ChlL, ChlN and ChlB. Forms a heterotetramer of two ChlB and two ChlN subunits. [4Fe-4S] cluster serves as cofactor.

The protein localises to the plastid. It localises to the chloroplast. The catalysed reaction is chlorophyllide a + oxidized 2[4Fe-4S]-[ferredoxin] + 2 ADP + 2 phosphate = protochlorophyllide a + reduced 2[4Fe-4S]-[ferredoxin] + 2 ATP + 2 H2O. Its pathway is porphyrin-containing compound metabolism; chlorophyll biosynthesis (light-independent). Functionally, component of the dark-operative protochlorophyllide reductase (DPOR) that uses Mg-ATP and reduced ferredoxin to reduce ring D of protochlorophyllide (Pchlide) to form chlorophyllide a (Chlide). This reaction is light-independent. The NB-protein (ChlN-ChlB) is the catalytic component of the complex. This is Light-independent protochlorophyllide reductase subunit B from Porphyra purpurea (Red seaweed).